A 793-amino-acid polypeptide reads, in one-letter code: Transcription factor opdR (793 aa).

Disordered regions lie at residues 1 to 29 (MAQDQNVPLVATSPPRKRRRPPKSCDPCR), 60 to 113 (TASS…QSQN), and 457 to 476 (LDDEQFGPKTERLPRPQPSE). A DNA-binding region (zn(2)-C6 fungal-type) is located at residues 25–53 (CDPCRRRKVRCDRKFPCGQCERARTALQC).

The protein localises to the nucleus. Transcription factor; part of the gene cluster that mediates the biosynthesis of oxopyrrolidines, polyketide-amino acid hybrid compounds with feature structures of tetramic acid. The sequence is that of Transcription factor opdR from Penicillium oxalicum (strain 114-2 / CGMCC 5302) (Penicillium decumbens).